A 100-amino-acid polypeptide reads, in one-letter code: NADH-quinone oxidoreductase subunit K (100 aa).

Transmembrane regions (helical) follow at residues Met1 to Gly21, Ile28 to Ala48, and Phe64 to Phe84.

Belongs to the complex I subunit 4L family. As to quaternary structure, NDH-1 is composed of 14 different subunits. Subunits NuoA, H, J, K, L, M, N constitute the membrane sector of the complex.

It localises to the cell inner membrane. The catalysed reaction is a quinone + NADH + 5 H(+)(in) = a quinol + NAD(+) + 4 H(+)(out). Its function is as follows. NDH-1 shuttles electrons from NADH, via FMN and iron-sulfur (Fe-S) centers, to quinones in the respiratory chain. The immediate electron acceptor for the enzyme in this species is believed to be ubiquinone. Couples the redox reaction to proton translocation (for every two electrons transferred, four hydrogen ions are translocated across the cytoplasmic membrane), and thus conserves the redox energy in a proton gradient. This chain is NADH-quinone oxidoreductase subunit K, found in Helicobacter pylori (strain ATCC 700392 / 26695) (Campylobacter pylori).